A 319-amino-acid chain; its full sequence is tRNA uridine(34) hydroxylase (319 aa).

Positions 127–221 (KQEDTVIIDA…YGKDPEVQGE (95 aa)) constitute a Rhodanese domain. The active-site Cysteine persulfide intermediate is Cys-181.

It belongs to the TrhO family.

The enzyme catalyses uridine(34) in tRNA + AH2 + O2 = 5-hydroxyuridine(34) in tRNA + A + H2O. Its function is as follows. Catalyzes oxygen-dependent 5-hydroxyuridine (ho5U) modification at position 34 in tRNAs. The protein is tRNA uridine(34) hydroxylase of Bacillus cereus (strain G9842).